The primary structure comprises 291 residues: MSMSSIFSRPRLVVKKVLARAQNEGDGAIVRRSIGRPELQNLDPFLMLDEFSVSQPAGFPDHPHRGFETVTYMLQGAFTHQDFAGHKGTIRTGDVQWMTAGRGIVHSEMPAGPGTQKGLQLWINLSSKDKMIEPRYQELLHQDIPKAEKDGVSVTILAGESMGKKSQVFTRTPTMYLDFTLKPGSEHHQPIPETWNAFLYIVEGEGAFGSSDSTTTPAHHCLVLGPGEGLSVWNKSSKPLRFVLIGGQPINEPVVQYGPFVMNTKSEIMQAYQDYQLGKNGFERSRQWYSK.

The protein belongs to the pirin family.

It localises to the nucleus. The protein is Pirin-like protein of Solanum lycopersicum (Tomato).